We begin with the raw amino-acid sequence, 227 residues long: PKHD-type hydroxylase Bphyt_7102 (227 aa).

Residues 80 to 179 (QVYPPLFNRY…RIASFFWVQS (100 aa)) form the Fe2OG dioxygenase domain. Residues H98, D100, and H160 each coordinate Fe cation. Residue R170 participates in 2-oxoglutarate binding.

It depends on Fe(2+) as a cofactor. L-ascorbate serves as cofactor.

The chain is PKHD-type hydroxylase Bphyt_7102 from Paraburkholderia phytofirmans (strain DSM 17436 / LMG 22146 / PsJN) (Burkholderia phytofirmans).